A 428-amino-acid polypeptide reads, in one-letter code: Serine--tRNA ligase (428 aa).

An L-serine-binding site is contributed by threonine 235–glutamate 237. An ATP-binding site is contributed by arginine 266–glutamate 268. Glutamate 289 lines the L-serine pocket. Glutamate 353–serine 356 contributes to the ATP binding site. Serine 389 provides a ligand contact to L-serine.

This sequence belongs to the class-II aminoacyl-tRNA synthetase family. Type-1 seryl-tRNA synthetase subfamily. As to quaternary structure, homodimer. The tRNA molecule binds across the dimer.

It is found in the cytoplasm. It catalyses the reaction tRNA(Ser) + L-serine + ATP = L-seryl-tRNA(Ser) + AMP + diphosphate + H(+). The catalysed reaction is tRNA(Sec) + L-serine + ATP = L-seryl-tRNA(Sec) + AMP + diphosphate + H(+). Its pathway is aminoacyl-tRNA biosynthesis; selenocysteinyl-tRNA(Sec) biosynthesis; L-seryl-tRNA(Sec) from L-serine and tRNA(Sec): step 1/1. Catalyzes the attachment of serine to tRNA(Ser). Is also able to aminoacylate tRNA(Sec) with serine, to form the misacylated tRNA L-seryl-tRNA(Sec), which will be further converted into selenocysteinyl-tRNA(Sec). The protein is Serine--tRNA ligase of Shewanella sp. (strain ANA-3).